Consider the following 414-residue polypeptide: CinA-like protein (414 aa).

Belongs to the CinA family.

The protein is CinA-like protein of Citrifermentans bemidjiense (strain ATCC BAA-1014 / DSM 16622 / JCM 12645 / Bem) (Geobacter bemidjiensis).